The following is a 310-amino-acid chain: Probable cell division protein WhiA (310 aa).

Residues 277-310 (SLKELAEQVPDGPISKSGVNHRLKKLHEIAENLR) constitute a DNA-binding region (H-T-H motif).

Belongs to the WhiA family.

In terms of biological role, involved in cell division and chromosome segregation. The sequence is that of Probable cell division protein WhiA from Lactobacillus delbrueckii subsp. bulgaricus (strain ATCC 11842 / DSM 20081 / BCRC 10696 / JCM 1002 / NBRC 13953 / NCIMB 11778 / NCTC 12712 / WDCM 00102 / Lb 14).